Here is a 413-residue protein sequence, read N- to C-terminus: Sensor protein SphS (413 aa).

Residues 176–398 enclose the Histidine kinase domain; it reads DVAHELKTPL…WLRVQLPQEP (223 aa). Position 179 is a phosphohistidine; by autocatalysis (histidine 179).

It localises to the cytoplasm. The catalysed reaction is ATP + protein L-histidine = ADP + protein N-phospho-L-histidine.. Its function is as follows. Member of the two-component regulatory system SphR/SphS. Sensory kinase. Is involved in inducible production of alkaline phosphatase in response to phosphate limitation as it is directly involved in the regulation of phoA transcription in response to phosphate limitation. SphS functions as a protein kinase that phosphorylates SphR. The protein is Sensor protein SphS (sphS) of Synechococcus elongatus (strain ATCC 33912 / PCC 7942 / FACHB-805) (Anacystis nidulans R2).